A 151-amino-acid polypeptide reads, in one-letter code: S-ribosylhomocysteine lyase (151 aa).

Fe cation-binding residues include H54, H58, and C121.

It belongs to the LuxS family. In terms of assembly, homodimer. Requires Fe cation as cofactor.

The enzyme catalyses S-(5-deoxy-D-ribos-5-yl)-L-homocysteine = (S)-4,5-dihydroxypentane-2,3-dione + L-homocysteine. Functionally, involved in the synthesis of autoinducer 2 (AI-2) which is secreted by bacteria and is used to communicate both the cell density and the metabolic potential of the environment. The regulation of gene expression in response to changes in cell density is called quorum sensing. Catalyzes the transformation of S-ribosylhomocysteine (RHC) to homocysteine (HC) and 4,5-dihydroxy-2,3-pentadione (DPD). The polypeptide is S-ribosylhomocysteine lyase (Clostridium perfringens (strain ATCC 13124 / DSM 756 / JCM 1290 / NCIMB 6125 / NCTC 8237 / Type A)).